The following is a 485-amino-acid chain: MEKTEEPPSSNNEEDSPAKEKIWCLQRVGRDSDWLRLFEDSEVSVGRGLNVTHQILSSSCPLMISRIHCVFKLNEGRQWTVTDNKSLNGVWVNGKRIPPSTPCILHQSDSVRLGVPLDGNPVEFDYILVQKNFDDVKSFLSGNLGKDSGAASLSQKLKNSKRKFDGGDESEPCPTQHSKSKLYRSSAPDKSRAQPCPSGERRETLKLSSRPLEEDRDKAGSSSSTCSDSSQHLATLHRYNRSLMVLKGRVGDTQKRAAELEQQQTQTPEREKEMQDLQTQLEALRGQLRSQQEQALRRMETLEKSFCEEERRLETEKAQQNEVGLKKQLEEALKEHRKVIEELKHAWQGFKEVLQAKDKELEVTKEEKEKAKAQKEEVVTQMTEVLESELQCSICSELFIEAVTLNCAHSFCQHCISEWRNRKDKCPMCWQNITSQTRSLVLDNCIDRMVENLSADMRERRLVLINERKGERSKSESISSSGGNK.

Residues 43-97 (VSVGRGLNVTHQILSSSCPLMISRIHCVFKLNEGRQWTVTDNKSLNGVWVNGKRI) enclose the FHA domain. Residues 150-232 (AASLSQKLKN…SSTCSDSSQH (83 aa)) form a disordered region. Residues 199 to 219 (GERRETLKLSSRPLEEDRDKA) show a composition bias toward basic and acidic residues. Low complexity predominate over residues 221 to 230 (SSSSTCSDSS). The RING-type zinc finger occupies 392-430 (CSICSELFIEAVTLNCAHSFCQHCISEWRNRKDKCPMCW).

It belongs to the RNF8 family. In terms of assembly, homodimer. Forms a E2-E3 ubiquitin ligase complex composed of the rnf8 homodimer and a E2 heterodimer of ube2n and ube2v2.

The protein resides in the nucleus. It catalyses the reaction S-ubiquitinyl-[E2 ubiquitin-conjugating enzyme]-L-cysteine + [acceptor protein]-L-lysine = [E2 ubiquitin-conjugating enzyme]-L-cysteine + N(6)-ubiquitinyl-[acceptor protein]-L-lysine.. The protein operates within protein modification; protein ubiquitination. E3 ubiquitin-protein ligase that plays a key role in DNA damage signaling via 2 distinct roles: by mediating the 'Lys-63'-linked ubiquitination of histones H2A and H2AX and promoting the recruitment of DNA repair proteins at double-strand breaks (DSBs) sites, and by catalyzing 'Lys-48'-linked ubiquitination to remove target proteins from DNA damage sites. Following DNA DSBs, it is recruited to the sites of damage by ATM-phosphorylated mdc1 and catalyzes the 'Lys-63'-linked ubiquitination of histones H2A and H2AX. H2A ubiquitination also mediates the ATM-dependent transcriptional silencing at regions flanking DSBs in cis, a mechanism to avoid collision between transcription and repair intermediates. Also catalyzes the formation of 'Lys-48'-linked polyubiquitin chains, leading to degradation of substrate proteins. In addition to its function in damage signaling, also plays a role in higher-order chromatin structure by mediating extensive chromatin decondensation. In Danio rerio (Zebrafish), this protein is E3 ubiquitin-protein ligase rnf8.